Reading from the N-terminus, the 148-residue chain is Sperm-specific protein PHI-2B (148 aa).

Residues 1–35 (PSPSRRSRSRSRSRSKSPKRSPAKKARKTPKKRRA) show a composition bias toward basic residues. 2 disordered regions span residues 1–44 (PSPS…KPST) and 97–148 (GVLV…KSNN). In terms of domain architecture, H15 spans 40–119 (KKPSTLSMIV…GATGSFRVGK (80 aa)). Basic residues predominate over residues 124-148 (PKKKAKKAKSPKKKSSKKSSNKSNN).

Belongs to the histone H1/H5 family. In terms of tissue distribution, sperm.

The protein localises to the nucleus. It localises to the chromosome. In terms of biological role, linker histones are implicated in chromatin remodeling and/or transcriptional regulation during spermiogenesis, the process of spermatid maturation into spermatozoa. The polypeptide is Sperm-specific protein PHI-2B (Mytilus californianus (California mussel)).